We begin with the raw amino-acid sequence, 205 residues long: Guanylate kinase (205 aa).

The 179-residue stretch at 17–195 (PRLTVLSGPS…VSRELLALML (179 aa)) folds into the Guanylate kinase-like domain. 24–31 (GPSGVGKS) is a binding site for ATP.

This sequence belongs to the guanylate kinase family.

The protein resides in the cytoplasm. It catalyses the reaction GMP + ATP = GDP + ADP. Its function is as follows. Essential for recycling GMP and indirectly, cGMP. The polypeptide is Guanylate kinase (Streptomyces kasugaensis).